A 471-amino-acid chain; its full sequence is Adenosylhomocysteinase (471 aa).

Residues Thr58, Asp133, and Glu195 each contribute to the substrate site. NAD(+) is bound at residue Thr196–Thr198. Substrate is bound by residues Lys225 and Asp229. Residues Asn230, Gly259 to Gly264, Glu282, Asn317, Ile338 to His340, and Asn383 contribute to the NAD(+) site.

Belongs to the adenosylhomocysteinase family. It depends on NAD(+) as a cofactor.

The protein localises to the cytoplasm. It carries out the reaction S-adenosyl-L-homocysteine + H2O = L-homocysteine + adenosine. The protein operates within amino-acid biosynthesis; L-homocysteine biosynthesis; L-homocysteine from S-adenosyl-L-homocysteine: step 1/1. Functionally, may play a key role in the regulation of the intracellular concentration of adenosylhomocysteine. The chain is Adenosylhomocysteinase from Rhodopseudomonas palustris (strain BisB5).